A 101-amino-acid polypeptide reads, in one-letter code: Small ribosomal subunit protein uS14 (101 aa).

The disordered stretch occupies residues 1 to 24; the sequence is MAKVSSIKKNEKRKKLSQSLHNKR. A compositionally biased stretch (basic residues) spans 10 to 24; the sequence is NEKRKKLSQSLHNKR.

This sequence belongs to the universal ribosomal protein uS14 family. In terms of assembly, part of the 30S ribosomal subunit. Contacts proteins S3 and S10.

Its function is as follows. Binds 16S rRNA, required for the assembly of 30S particles and may also be responsible for determining the conformation of the 16S rRNA at the A site. The polypeptide is Small ribosomal subunit protein uS14 (Rickettsia bellii (strain OSU 85-389)).